Consider the following 180-residue polypeptide: ATP synthase subunit delta (180 aa).

This sequence belongs to the ATPase delta chain family. F-type ATPases have 2 components, F(1) - the catalytic core - and F(0) - the membrane proton channel. F(1) has five subunits: alpha(3), beta(3), gamma(1), delta(1), epsilon(1). F(0) has three main subunits: a(1), b(2) and c(10-14). The alpha and beta chains form an alternating ring which encloses part of the gamma chain. F(1) is attached to F(0) by a central stalk formed by the gamma and epsilon chains, while a peripheral stalk is formed by the delta and b chains.

Its subcellular location is the cell membrane. F(1)F(0) ATP synthase produces ATP from ADP in the presence of a proton or sodium gradient. F-type ATPases consist of two structural domains, F(1) containing the extramembraneous catalytic core and F(0) containing the membrane proton channel, linked together by a central stalk and a peripheral stalk. During catalysis, ATP synthesis in the catalytic domain of F(1) is coupled via a rotary mechanism of the central stalk subunits to proton translocation. Its function is as follows. This protein is part of the stalk that links CF(0) to CF(1). It either transmits conformational changes from CF(0) to CF(1) or is implicated in proton conduction. The polypeptide is ATP synthase subunit delta (Dehalococcoides mccartyi (strain ATCC BAA-2266 / KCTC 15142 / 195) (Dehalococcoides ethenogenes (strain 195))).